The chain runs to 158 residues: Hypoxanthine DNA glycosylase (158 aa).

The active site involves Asn39.

Belongs to the uracil-DNA glycosylase (UDG) superfamily. Type 6 (HDG) family.

Functionally, excises hypoxanthine, a deamination product of adenine, from double-stranded DNA. Acts on double-stranded DNA containing G/I, T/I, A/I and C/I base pairs, but not on single-stranded inosine-containing DNA. Also has minor xanthine DNA glycosylase activity. Lacks any detectable uracil-DNA glycosylase activity. The protein is Hypoxanthine DNA glycosylase of Methanosarcina acetivorans (strain ATCC 35395 / DSM 2834 / JCM 12185 / C2A).